We begin with the raw amino-acid sequence, 194 residues long: Imidazoleglycerol-phosphate dehydratase (194 aa).

The protein belongs to the imidazoleglycerol-phosphate dehydratase family.

It is found in the cytoplasm. It carries out the reaction D-erythro-1-(imidazol-4-yl)glycerol 3-phosphate = 3-(imidazol-4-yl)-2-oxopropyl phosphate + H2O. Its pathway is amino-acid biosynthesis; L-histidine biosynthesis; L-histidine from 5-phospho-alpha-D-ribose 1-diphosphate: step 6/9. The protein is Imidazoleglycerol-phosphate dehydratase of Bacillus cereus (strain AH187).